The following is a 162-amino-acid chain: Probable chemoreceptor glutamine deamidase CheD (162 aa).

It belongs to the CheD family.

The enzyme catalyses L-glutaminyl-[protein] + H2O = L-glutamyl-[protein] + NH4(+). In terms of biological role, probably deamidates glutamine residues to glutamate on methyl-accepting chemotaxis receptors (MCPs), playing an important role in chemotaxis. This is Probable chemoreceptor glutamine deamidase CheD from Caldanaerobacter subterraneus subsp. tengcongensis (strain DSM 15242 / JCM 11007 / NBRC 100824 / MB4) (Thermoanaerobacter tengcongensis).